Here is a 178-residue protein sequence, read N- to C-terminus: Oligoribonuclease (178 aa).

One can recognise an Exonuclease domain in the interval 7 to 168; it reads LIWIDLEMTG…DDIRESIAEL (162 aa). The active site involves Tyr-128.

This sequence belongs to the oligoribonuclease family.

The protein localises to the cytoplasm. Its function is as follows. 3'-to-5' exoribonuclease specific for small oligoribonucleotides. This Francisella tularensis subsp. novicida (strain U112) protein is Oligoribonuclease.